The primary structure comprises 150 residues: Arginine repressor (150 aa).

It belongs to the ArgR family.

Its subcellular location is the cytoplasm. The protein operates within amino-acid biosynthesis; L-arginine biosynthesis [regulation]. In terms of biological role, regulates arginine biosynthesis genes. This is Arginine repressor from Desulfitobacterium hafniense (strain DSM 10664 / DCB-2).